The following is a 421-amino-acid chain: SH2 domain-containing protein 4A (421 aa).

Phosphoserine is present on residues serine 117 and serine 123. Positions 132–271 (DLQAMKKTEP…FLQPLGIPPK (140 aa)) are disordered. Basic and acidic residues-rich tracts occupy residues 163-201 (TRKDDKAQTKPVKEKDHEEMKQTEDEKTKQIYKSWKEDS) and 211-230 (KAADEKRRSLAKQAREDYKR). Serine 232 is modified (phosphoserine). The region spanning 315–407 (WFHGILTLKK…LGKELLLYPC (93 aa)) is the SH2 domain.

In terms of assembly, interacts with ESR1. As to expression, in the kidney, expressed only in the glomerulus. Expressed in T-cells, B-cells, macrophages and dendritic cells (at protein level). In adult, highest levels are found in muscle and lung with lower levels in kidney.

It is found in the cytoplasm. Functionally, inhibits estrogen-induced cell proliferation by competing with PLCG for binding to ESR1, blocking the effect of estrogen on PLCG and repressing estrogen-induced proliferation. May play a role in T-cell development and function. In Mus musculus (Mouse), this protein is SH2 domain-containing protein 4A (Sh2d4a).